Consider the following 525-residue polypeptide: Ribosomal protein S6 kinase beta-1 (525 aa).

A TOS motif motif is present at residues 28-32 (FDIDL). Positions 32–46 (LDQPEDAGSEDELEE) are enriched in acidic residues. The segment at 32–54 (LDQPEDAGSEDELEEGGQLNESM) is disordered. The Protein kinase domain maps to 91-352 (FELLRVLGKG…AGEVQAHPFF (262 aa)). ATP contacts are provided by residues 97–105 (LGKGGYGKV) and lysine 123. The active-site Proton acceptor is aspartate 218. Phosphothreonine; by PDPK1 is present on threonine 252. The region spanning 353–423 (RHINWEELLA…VAPSVLESVK (71 aa)) is the AGC-kinase C-terminal domain. The disordered stretch occupies residues 380–399 (SQFDSKFTRQTPVDSPDDST). Residues 381–399 (QFDSKFTRQTPVDSPDDST) show a composition bias toward polar residues. Serine 394 is subject to Phosphoserine. Phosphothreonine; by MTOR, NEK6 and NEK7 is present on threonine 412. The segment at 424–525 (EKFSFEPKIR…KRPEHLRMNL (102 aa)) is autoinhibitory domain. A phosphoserine mark is found at serine 434 and serine 441. Threonine 444 is modified (phosphothreonine). Residues serine 447 and serine 452 each carry the phosphoserine modification. Lysine 516 carries the post-translational modification N6-acetyllysine.

Belongs to the protein kinase superfamily. AGC Ser/Thr protein kinase family. S6 kinase subfamily. Interacts with PPP1R9A/neurabin-1. Interacts with RPTOR. Interacts with IRS1. Interacts with EIF3B and EIF3C. Interacts with TRAF4. Interacts with POLDIP3. Interacts (via N-terminus) with IER5. Phosphorylation at Thr-412 is regulated by mTORC1. The phosphorylation at this site is maintained by an agonist-dependent autophosphorylation mechanism. Activated by phosphorylation at Thr-252 by PDPK1. Dephosphorylation by PPP1CC at Thr-412 in mitochondrion.

The protein localises to the cytoplasm. It is found in the synapse. It localises to the synaptosome. Its subcellular location is the mitochondrion outer membrane. The protein resides in the mitochondrion. The catalysed reaction is L-seryl-[protein] + ATP = O-phospho-L-seryl-[protein] + ADP + H(+). It carries out the reaction L-threonyl-[protein] + ATP = O-phospho-L-threonyl-[protein] + ADP + H(+). Its activity is regulated as follows. Activation requires multiple phosphorylation events on serine/threonine residues. Activation appears to be first mediated by phosphorylation of multiple sites in the autoinhibitory domain, which facilitates phosphorylation at Thr-412, disrupting the autoinhibitory mechanism and allowing phosphorylation of Thr-252 by PDPK1. The active conformation of the kinase is believed to be stabilized by a mechanism involving three conserved phosphorylation sites located in the kinase domain activation loop (Thr-252) and in the AGC-kinase C-terminal domain (Ser-394 in the middle of the tail/linker region and Thr-412 within a hydrophobic motif at its end). Activated by mTORC1; isoform Alpha I and isoform Alpha II are sensitive to rapamycin, which inhibits activating phosphorylation at Thr-412. Activated by PDPK1. Serine/threonine-protein kinase that acts downstream of mTOR signaling in response to growth factors and nutrients to promote cell proliferation, cell growth and cell cycle progression. Regulates protein synthesis through phosphorylation of EIF4B, RPS6 and EEF2K, and contributes to cell survival by repressing the pro-apoptotic function of BAD. Under conditions of nutrient depletion, the inactive form associates with the EIF3 translation initiation complex. Upon mitogenic stimulation, phosphorylation by the mechanistic target of rapamycin complex 1 (mTORC1) leads to dissociation from the EIF3 complex and activation. The active form then phosphorylates and activates several substrates in the pre-initiation complex, including the EIF2B complex and the cap-binding complex component EIF4B. Also controls translation initiation by phosphorylating a negative regulator of EIF4A, PDCD4, targeting it for ubiquitination and subsequent proteolysis. Promotes initiation of the pioneer round of protein synthesis by phosphorylating POLDIP3/SKAR. In response to IGF1, activates translation elongation by phosphorylating EEF2 kinase (EEF2K), which leads to its inhibition and thus activation of EEF2. Also plays a role in feedback regulation of mTORC2 by mTORC1 by phosphorylating MAPKAP1/SIN1, MTOR and RICTOR, resulting in the inhibition of mTORC2 and AKT1 signaling. Also involved in feedback regulation of mTORC1 and mTORC2 by phosphorylating DEPTOR. Mediates cell survival by phosphorylating the pro-apoptotic protein BAD and suppressing its pro-apoptotic function. Phosphorylates mitochondrial URI1 leading to dissociation of a URI1-PPP1CC complex. The free mitochondrial PPP1CC can then dephosphorylate RPS6KB1 at Thr-412, which is proposed to be a negative feedback mechanism for the RPS6KB1 anti-apoptotic function. Mediates TNF-alpha-induced insulin resistance by phosphorylating IRS1 at multiple serine residues, resulting in accelerated degradation of IRS1. In cells lacking functional TSC1-2 complex, constitutively phosphorylates and inhibits GSK3B. May be involved in cytoskeletal rearrangement through binding to neurabin. Phosphorylates and activates the pyrimidine biosynthesis enzyme CAD, downstream of MTOR. Following activation by mTORC1, phosphorylates EPRS and thereby plays a key role in fatty acid uptake by adipocytes and also most probably in interferon-gamma-induced translation inhibition. This Mus musculus (Mouse) protein is Ribosomal protein S6 kinase beta-1 (Rps6kb1).